A 910-amino-acid chain; its full sequence is Lysine-specific demethylase 7 homolog (910 aa).

Residues 1 to 11 show a composition bias toward polar residues; sequence MDGNDINIQKN. Disordered stretches follow at residues 1-58, 103-162, and 183-212; these read MDGN…HQTP, NKMG…GSEP, and QEEL…DRCG. Positions 25-35 are enriched in basic and acidic residues; the sequence is QHSDHKNHESA. Polar residues predominate over residues 43–58; the sequence is YTASQPALSSTEHQTP. The span at 118-130 shows a compositional bias: basic and acidic residues; that stretch reads PKSEPKIEPHVTD. Polar residues predominate over residues 150–160; sequence ESNQNYVSNGS. The segment covering 200 to 210 has biased composition (basic and acidic residues); the sequence is PEQKTPKESDR. A PHD-type zinc finger spans residues 208-290; that stretch reads SDRCGGCGKF…KFFCPKCVPH (83 aa). The region spanning 441 to 612 is the JmjC domain; that stretch reads SDNNEMKEIA…MQMRVYHLEN (172 aa). Substrate contacts are provided by residues 505-510, Tyr518, Lys525, and His580; that span reads TDFHVD. 2 residues coordinate Fe cation: His508 and Asp510. A Fe cation-binding site is contributed by His580. Disordered stretches follow at residues 712 to 790 and 864 to 910; these read KIQN…PSEV and EAVH…KLKM. Residues 748–757 are compositionally biased toward basic residues; sequence YKKKYTKKAK. Basic and acidic residues predominate over residues 758 to 780; that stretch reads KDNDDAPKVKKAKKEEVPEEKVP.

It belongs to the JHDM1 histone demethylase family. JHDM1D subfamily. Fe(2+) is required as a cofactor. Mainly expressed in neurons. Also weakly expressed in some muscle, intestinal and hypodermal cells.

It localises to the nucleus. With respect to regulation, competitively inhibited by 2-hydroxyglutarate. Its function is as follows. Histone demethylase required for nervous system development. Specifically demethylates dimethylated 'Lys-9', 'Lys-23' and 'Lys-27' (H3K9me2, H3K23me2 and H3K27me2, respectively) of histone H3, thereby playing a central role in histone code. Promotes mitochondrial stress-induced longevity. The chain is Lysine-specific demethylase 7 homolog (jmjd-1.2) from Caenorhabditis elegans.